Reading from the N-terminus, the 194-residue chain is Peptidyl-tRNA hydrolase (194 aa).

Tyr-17 is a tRNA binding site. His-22 (proton acceptor) is an active-site residue. TRNA contacts are provided by Tyr-68, Asn-70, and Asn-116.

This sequence belongs to the PTH family. As to quaternary structure, monomer.

It is found in the cytoplasm. It carries out the reaction an N-acyl-L-alpha-aminoacyl-tRNA + H2O = an N-acyl-L-amino acid + a tRNA + H(+). In terms of biological role, hydrolyzes ribosome-free peptidyl-tRNAs (with 1 or more amino acids incorporated), which drop off the ribosome during protein synthesis, or as a result of ribosome stalling. Functionally, catalyzes the release of premature peptidyl moieties from peptidyl-tRNA molecules trapped in stalled 50S ribosomal subunits, and thus maintains levels of free tRNAs and 50S ribosomes. This is Peptidyl-tRNA hydrolase from Chromohalobacter salexigens (strain ATCC BAA-138 / DSM 3043 / CIP 106854 / NCIMB 13768 / 1H11).